Reading from the N-terminus, the 315-residue chain is Voltage-dependent calcium channel gamma-3 subunit (315 aa).

Transmembrane regions (helical) follow at residues Ile8 to Val28, Ser104 to Ala124, Ile135 to Val155, and Phe181 to Ile201. Residues Arg232 to Gly253 are disordered. Position 248 is a phosphoserine (Ser248).

It belongs to the PMP-22/EMP/MP20 family. CACNG subfamily. As to quaternary structure, the L-type calcium channel is composed of five subunits: alpha-1, alpha-2/delta, beta and gamma. Acts as an auxiliary subunit for AMPA-selective glutamate receptors (AMPARs). Found in a complex with GRIA1, GRIA2, GRIA3, GRIA4, CNIH2, CNIH3, CACNG2, CACNG4, CACNG5, CACNG7 and CACNG8. Interacts with AP4M1 and GRIA1; associates GRIA1 with the adaptor protein complex 4 (AP-4) to target GRIA1 to the somatodendritic compartment of neurons.

The protein localises to the membrane. Regulates the trafficking to the somatodendritic compartment and gating properties of AMPA-selective glutamate receptors (AMPARs). Promotes their targeting to the cell membrane and synapses and modulates their gating properties by slowing their rates of activation, deactivation and desensitization. Does not show subunit-specific AMPA receptor regulation and regulates all AMPAR subunits. Thought to stabilize the calcium channel in an inactivated (closed) state. This Mus musculus (Mouse) protein is Voltage-dependent calcium channel gamma-3 subunit (Cacng3).